The sequence spans 143 residues: Hemoglobin subunit alpha-1 (143 aa).

Serine 2 bears the N-acetylserine mark. One can recognise a Globin domain in the interval 2 to 143; sequence SLSAKDKATV…LALALCEKYR (142 aa). Residue histidine 60 coordinates O2. Position 89 (histidine 89) interacts with heme b.

Belongs to the globin family. In terms of assembly, hb 1 is a heterotetramer of two alpha-1 and two beta-1 chains. Red blood cells.

In terms of biological role, involved in oxygen transport from gills to the various peripheral tissues. The polypeptide is Hemoglobin subunit alpha-1 (hba1) (Boreogadus saida (Polar cod)).